Consider the following 114-residue polypeptide: Cytochrome c2 (114 aa).

Gln1 is modified (pyrrolidone carboxylic acid). Heme c contacts are provided by Cys13, Cys16, His17, and Met93.

This sequence belongs to the cytochrome c family. Binds 1 heme c group covalently per subunit.

The protein localises to the periplasm. Its function is as follows. Cytochrome c2 is found mainly in purple, non-sulfur, photosynthetic bacteria where it functions as the electron donor to the oxidized bacteriochlorophyll in the photophosphorylation pathway. However, it may also have a role in the respiratory chain and is found in some non-photosynthetic bacteria. This Rhodopseudomonas palustris protein is Cytochrome c2.